The primary structure comprises 536 residues: MLNTDQLLVRAISERPRKSTEPLVPGTPTGLFSLLSNISPEEQGRLGSGDSLQSQSCQQQRSYSAGQTTKKERKPRRRNKKGRGSAEAEDLFSSPRKPSFPFQWAWESFIIDGQALLQSGSSVAVGHRSLLFPPAAPQCKTRHKSVANLSEDLRACHKSEVQNLGRRYQPGAWANLSLPLGKAESQGLERPTFWSTGKGSGSECEDVSEVEGQNADEAEKSLSTGELPQLPGQGLTLEEELISEVMEEEEHNRRKGSSVNKGRNSGEKGSEEGELQSHNQGSSSNSNSLRKSPKGTSGAKEFKGPWDLERLHRQLQEELESGPQKQTWKALRAAVQASARNRKTPVTGEEESFLTANFPNRTFHKRQEATRNLLQAWEQQQLKEKQQAEMRRAREQQVQQQVARCLAAYTPGGNRGTLGPQRKLEELRRKERQRFAEYQAELQGIQHRVQARPFLFQQAMQTNARLTANRRFSQVLSALGVDEEQLLAEAGNAEGIPRKHRSYRSFGVEMESSPQSPPKTEPTSSQPGRHPSPTLD.

3 disordered regions span residues 1-94 (MLNT…LFSS), 185-234 (SQGL…PGQG), and 246-305 (MEEE…FKGP). The segment covering 48–64 (SGDSLQSQSCQQQRSYS) has biased composition (low complexity). Positions 71–83 (KERKPRRRNKKGR) are enriched in basic residues. A coiled-coil region spans residues 375-451 (QAWEQQQLKE…LQGIQHRVQA (77 aa)). The disordered stretch occupies residues 491–536 (GNAEGIPRKHRSYRSFGVEMESSPQSPPKTEPTSSQPGRHPSPTLD).

In Rattus norvegicus (Rat), this protein is Testis-specific protein 10-interacting protein (Tsga10ip).